The primary structure comprises 978 residues: Retinoblastoma-related protein 2 (978 aa).

Residues 385-585 (TPVTSAMTTA…EKGSSLYNSL (201 aa)) form a domain A region. A pocket region spans residues 385-832 (TPVTSAMTTA…NQVFVPTVKP (448 aa)). Residues 586–704 (VVARPSLSTE…PVSGNEKCAV (119 aa)) form a spacer region. A disordered region spans residues 616–645 (QSIHPDGLPPTPSKRWPSAGPDGNCYPQSP). Residues 705 to 832 (VGVQIFFSKI…NQVFVPTVKP (128 aa)) form a domain B region. Disordered regions lie at residues 841–878 (STRP…SSSH) and 947–978 (VAGS…KTDS). Over residues 850 to 864 (TNSQIPGSPKSSPFS) the composition is skewed to polar residues. The segment covering 958 to 971 (SASSDPAAAFSPLS) has biased composition (low complexity).

Belongs to the retinoblastoma protein (RB) family.

Its subcellular location is the nucleus. Functionally, regulator of biological processes that recruits a histone deacetylase to control gene transcription. May play a role in the entry into mitosis, negatively regulating the cell proliferation. Formation of stable complexes with geminiviridae replication-associated proteins may create a cellular environment which favors viral DNA replication. This Oryza sativa subsp. japonica (Rice) protein is Retinoblastoma-related protein 2 (RBR2).